A 420-amino-acid chain; its full sequence is Replication factor C large subunit (420 aa).

Position 46–53 (46–53) interacts with ATP; it reads GVQGSGKT.

Belongs to the activator 1 small subunits family. RfcL subfamily. In terms of assembly, heteromultimer composed of small subunits (RfcS) and large subunits (RfcL).

Part of the RFC clamp loader complex which loads the PCNA sliding clamp onto DNA. This chain is Replication factor C large subunit, found in Thermoplasma volcanium (strain ATCC 51530 / DSM 4299 / JCM 9571 / NBRC 15438 / GSS1).